A 77-amino-acid polypeptide reads, in one-letter code: Adipokinetic prohormone type 3 (77 aa).

The N-terminal stretch at 1-22 (MQVRAVLVLAVVALVAVATSRA) is a signal peptide. Pyrrolidone carboxylic acid is present on glutamine 23. Tryptophan amide is present on tryptophan 30.

This sequence belongs to the AKH/HRTH/RPCH family.

Its subcellular location is the secreted. This hormone, released from cells in the corpora cardiaca, causes release of diglycerides from the fat body and stimulation of muscles to use these diglycerides as an energy source during energy-demanding processes. This is Adipokinetic prohormone type 3 from Locusta migratoria (Migratory locust).